A 264-amino-acid chain; its full sequence is Thymidylate synthase (264 aa).

Arg21 provides a ligand contact to dUMP. Position 51 (His51) interacts with (6R)-5,10-methylene-5,6,7,8-tetrahydrofolate. 126 to 127 (RR) provides a ligand contact to dUMP. The Nucleophile role is filled by Cys146. Residues 166 to 169 (RSAD), Asn177, and 207 to 209 (HLY) contribute to the dUMP site. A (6R)-5,10-methylene-5,6,7,8-tetrahydrofolate-binding site is contributed by Asp169. Ser263 contacts (6R)-5,10-methylene-5,6,7,8-tetrahydrofolate.

The protein belongs to the thymidylate synthase family. Bacterial-type ThyA subfamily. In terms of assembly, homodimer.

It localises to the cytoplasm. The catalysed reaction is dUMP + (6R)-5,10-methylene-5,6,7,8-tetrahydrofolate = 7,8-dihydrofolate + dTMP. The protein operates within pyrimidine metabolism; dTTP biosynthesis. Its function is as follows. Catalyzes the reductive methylation of 2'-deoxyuridine-5'-monophosphate (dUMP) to 2'-deoxythymidine-5'-monophosphate (dTMP) while utilizing 5,10-methylenetetrahydrofolate (mTHF) as the methyl donor and reductant in the reaction, yielding dihydrofolate (DHF) as a by-product. This enzymatic reaction provides an intracellular de novo source of dTMP, an essential precursor for DNA biosynthesis. This chain is Thymidylate synthase, found in Shouchella clausii (strain KSM-K16) (Alkalihalobacillus clausii).